A 226-amino-acid polypeptide reads, in one-letter code: Isoprenyl transferase (226 aa).

Residue Asp-12 is part of the active site. Asp-12 serves as a coordination point for Mg(2+). Substrate-binding positions include 13-16 (GNAR), Trp-17, Lys-25, His-29, and 57-59 (SFE). Asn-60 functions as the Proton acceptor in the catalytic mechanism. Substrate contacts are provided by residues Trp-61, Arg-63, Arg-174, and 180–182 (RIS). Glu-193 contributes to the Mg(2+) binding site.

This sequence belongs to the UPP synthase family. In terms of assembly, homodimer. Mg(2+) is required as a cofactor.

Its function is as follows. Catalyzes the condensation of isopentenyl diphosphate (IPP) with allylic pyrophosphates generating different type of terpenoids. The chain is Isoprenyl transferase from Rickettsia prowazekii (strain Madrid E).